The sequence spans 90 residues: Small ribosomal subunit protein bS16 (90 aa).

It belongs to the bacterial ribosomal protein bS16 family.

This Lysinibacillus sphaericus (strain C3-41) protein is Small ribosomal subunit protein bS16.